A 646-amino-acid chain; its full sequence is Peptidylprolyl isomerase domain and WD repeat-containing protein 1 (646 aa).

Residues 1–50 (MATESGSDSQLRRRRRRDPEGSEKTELSEREPALAVAGSEENDDENEERW) are disordered. Residue Ala2 is modified to N-acetylalanine. Basic and acidic residues predominate over residues 17 to 32 (RDPEGSEKTELSEREP). 4 WD repeats span residues 88-126 (MHRD…IEFV), 131-170 (SHLG…MINM), 221-260 (LHVS…YKFP), and 278-319 (KCKA…RVFD). In terms of domain architecture, PPIase cyclophilin-type spans 490–645 (VSDSAIVHTS…EDVSIINITV (156 aa)).

Belongs to the cyclophilin-type PPIase family. PPIL1 subfamily. As to quaternary structure, identified in the spliceosome C complex.

Its subcellular location is the nucleus. It carries out the reaction [protein]-peptidylproline (omega=180) = [protein]-peptidylproline (omega=0). Inhibited by cyclosporin A (CsA). PPIase that catalyzes the cis-trans isomerization of proline imidic peptide bonds in oligopeptides and may therefore assist protein folding. May be involved in pre-mRNA splicing. In Mus musculus (Mouse), this protein is Peptidylprolyl isomerase domain and WD repeat-containing protein 1.